Here is a 1565-residue protein sequence, read N- to C-terminus: Major cell-surface adhesin PAc (1565 aa).

The signal sequence occupies residues 1-38; that stretch reads MKVKKTYGFRKSKISKTLCGAVLGTVAAVSVAGQKVFA. Over residues 42–54 the composition is skewed to low complexity; it reads TTTSDVDTKVVGT. Residues 42–81 are disordered; it reads TTTSDVDTKVVGTQTGNPATNLPEAQGSASKEAEQSQTKL. Positions 72–81 are enriched in basic and acidic residues; that stretch reads KEAEQSQTKL. Ag I/II A repeat units lie at residues 146-220, 221-302, 303-384, and 385-466; these read KKTT…QKTN, AANQ…QEAN, AANE…KKAN, and AANE…QKDL. The heptad repeats of Y-[EQ]-X-X-L-A-X stretch occupies residues 203-448; the sequence is EAKLAQYQAD…KRNADAKADY (246 aa). The tract at residues 461–834 is V-region (lectin-like); the sequence is KYQKDLADYP…VNVPKVTKEK (374 aa). Disordered stretches follow at residues 827 to 985 and 1486 to 1511; these read VPKV…PTPP and NTVK…PRTS. One copy of the P1 repeat lies at 848 to 887; it reads TYETEKPLKPAPVAPNYEKEPTPPTRTPDQAEPNKPTPPT. The stretch at 888–926 is one P2 repeat; the sequence is YETEKPLEPAPVEPSYEAEPTPPTRTPDQAEPNKPTPPT. One copy of the P3 repeat lies at 927-964; sequence YETEKPLEPAPVEPSYEAEPTPPTPTPDQPEPNKPVEP. Positions 946–961 are enriched in pro residues; sequence PTPPTPTPDQPEPNKP. The LPXTG sorting signal signature appears at 1532–1536; the sequence is LPNTG. Residue T1535 is modified to Pentaglycyl murein peptidoglycan amidated threonine. Positions 1536 to 1565 are cleaved as a propeptide — removed by sortase; sequence GVTNNAYMPLLGIIGLVTSFSLLGLKAKKD.

It belongs to the antigen I/II family.

Its subcellular location is the secreted. The protein localises to the cell wall. Surface protein antigen implicated in dental caries. This is Major cell-surface adhesin PAc from Streptococcus mutans.